Reading from the N-terminus, the 682-residue chain is PWWP domain-containing DNA repair factor 3A (682 aa).

S105 bears the Phosphoserine mark. A disordered region spans residues 121–145 (EKTDADVASQVSSAPSPSLLGEDGQ). Residues 127 to 140 (VASQVSSAPSPSLL) are compositionally biased toward low complexity. S168 is modified (phosphoserine). 2 disordered regions span residues 179-318 (GPKT…GAAP) and 334-369 (GAGD…EEEP). Positions 203–220 (HGQESTTKKRQRNLGEKP) are enriched in basic and acidic residues. Residues S345 and S346 each carry the phosphoserine modification. A compositionally biased stretch (polar residues) spans 346-357 (SEESTGFKSTHS). The PWWP domain maps to 383 to 444 (VGMLVWLKYQ…KHFDCKEKHA (62 aa)).

The protein belongs to the PWWP3A family. Interacts with TP53BP1 (via BRCT domain); the interaction is not dependent on its phosphorylation status. Binds nucleosomes. Interacts with trimethylated 'Lys-36' of histone H3 (H3K36me3) (in vitro).

It localises to the nucleus. Involved in the DNA damage response pathway by contributing to the maintenance of chromatin architecture. Recruited to the vicinity of DNA breaks by TP53BP1 and plays an accessory role to facilitate damage-induced chromatin changes and promoting chromatin relaxation. Required for efficient DNA repair and cell survival following DNA damage. This Mus musculus (Mouse) protein is PWWP domain-containing DNA repair factor 3A (Pwwp3a).